Here is a 318-residue protein sequence, read N- to C-terminus: MMLWQATPASLWQGRDDSAEAPNALRLFQTIVRAERFAPQEMPGDIALLGFACDEGVRRNKGRTGAADGPATLRRALANMASHQGHDRCVDMGTISVDGEQLEAAHQALREAVADCQRVGKRTLVLGGGHETAFGHGAGVLDAFPGEKVGIINLDAHLDLRFADCASSGTPFRQLALECDAQQRGFHYTCIGVSRAANTQALWDEAARRQVAIVEDLEVLTAFETRVLPELERNIAQFDRLYLTIDLDVLPAREMPAVSAPAALGVPLATLLRIVEPLCRNGKLQAVDLVEFNPLFDIDGQGARAAARLAWQIAHWWR.

Positions 130, 155, 157, 159, 246, and 248 each coordinate Mn(2+).

The protein belongs to the arginase family. Mn(2+) serves as cofactor.

The enzyme catalyses N-formimidoyl-L-glutamate + H2O = formamide + L-glutamate. The protein operates within amino-acid degradation; L-histidine degradation into L-glutamate; L-glutamate from N-formimidoyl-L-glutamate (hydrolase route): step 1/1. Its function is as follows. Catalyzes the conversion of N-formimidoyl-L-glutamate to L-glutamate and formamide. The polypeptide is Formimidoylglutamase (Klebsiella pneumoniae subsp. pneumoniae (strain ATCC 700721 / MGH 78578)).